Consider the following 20-residue polypeptide: Unknown protein NF009 from 2D-PAGE (20 aa).

A disordered region spans residues 1-20 (ATSAAQGAALDESVRKVLKP).

This chain is Unknown protein NF009 from 2D-PAGE, found in Naegleria fowleri (Brain eating amoeba).